The chain runs to 185 residues: Peptide deformylase (185 aa).

Cysteine 109 and histidine 152 together coordinate Fe cation. Glutamate 153 is an active-site residue. Histidine 156 is a Fe cation binding site.

This sequence belongs to the polypeptide deformylase family. Fe(2+) serves as cofactor.

The enzyme catalyses N-terminal N-formyl-L-methionyl-[peptide] + H2O = N-terminal L-methionyl-[peptide] + formate. Functionally, removes the formyl group from the N-terminal Met of newly synthesized proteins. Requires at least a dipeptide for an efficient rate of reaction. N-terminal L-methionine is a prerequisite for activity but the enzyme has broad specificity at other positions. This chain is Peptide deformylase, found in Roseiflexus castenholzii (strain DSM 13941 / HLO8).